The primary structure comprises 167 residues: Gametocyte-specific factor 1 (167 aa).

Serine 8 carries the phosphoserine modification. CHHC U11-48K-type zinc fingers lie at residues 14–41 (LLQC…RKNH) and 48–75 (LATC…DDKS). Positions 17, 23, 33, 37, 51, 57, 67, and 71 each coordinate Zn(2+).

The protein belongs to the UPF0224 (FAM112) family. As to expression, expressed abundantly in adult testis, at moderate levels in unfertilized eggs and ovaries and weakly in embryonic stem cells.

It is found in the cytoplasm. In terms of biological role, required for spermatogenesis and is involved in the suppression of retrotransposon transcription in male germ cells. The chain is Gametocyte-specific factor 1 from Mus musculus (Mouse).